The primary structure comprises 211 residues: Homeobox protein Rhox5 (211 aa).

Positions 38-129 are disordered; sequence FFQAGEGRDE…PLRRPGSTQR (92 aa). Composition is skewed to gly residues over residues 52-62 and 70-84; these read GQPGEGAVGTE and GGEG…GPVG. The span at 102–119 shows a compositional bias: basic and acidic residues; sequence HEPVAEGTESVKSEDKQM. A DNA-binding region (homeobox; atypical) is located at residues 119–176; the sequence is MPLRRPGSTQRRLAELERILLSSGSSSGGRSLIDGWISVCPECRNWFKIRRAAYRRNR.

Highly expressed in placenta. Lower levels in testis, epididymis, ovary and skeletal muscle.

The protein resides in the nucleus. Transcription factor required for differentiation of embryonic stem cells (ESCs) into primordial germ cells. This chain is Homeobox protein Rhox5 (Rhox5), found in Rattus norvegicus (Rat).